Here is a 445-residue protein sequence, read N- to C-terminus: UPF0210 protein SPH_0352 (445 aa).

This sequence belongs to the UPF0210 family. In terms of assembly, homodimer.

The polypeptide is UPF0210 protein SPH_0352 (Streptococcus pneumoniae (strain Hungary19A-6)).